Consider the following 178-residue polypeptide: Caveolin-1 (178 aa).

An N-acetylserine modification is found at S2. At S2 the chain carries Phosphoserine. Residues 2–94 (SGGKYVDSEG…WKASFTTFTV (93 aa)) form a required for homooligomerization region. Topologically, residues 2–104 (SGGKYVDSEG…TKYWFYRLLS (103 aa)) are cytoplasmic. Position 5 is an N6-acetyllysine; alternate (K5). K5 participates in a covalent cross-link: Glycyl lysine isopeptide (Lys-Gly) (interchain with G-Cter in ubiquitin); alternate. Y6 carries the phosphotyrosine modification. Residue S9 is modified to Phosphoserine. The residue at position 14 (Y14) is a Phosphotyrosine; by ABL1. Y25 is modified (phosphotyrosine). Glycyl lysine isopeptide (Lys-Gly) (interchain with G-Cter in ubiquitin) cross-links involve residues K26, K30, K39, K47, and K57. The interaction with CAVIN3 stretch occupies residues 82–94 (DGIWKASFTTFTV). Residues 105–125 (ALFGIPMALIWGIYFAILSFL) constitute an intramembrane region (helical). At 126–178 (HIWAVVPCIKSFLIEIQCISRVYSIYVHTFCDPLFEAIGKIFSNIRINMQKEI) the chain is on the cytoplasmic side. An interacts with SPRY1, SPRY2, SPRY3 and SPRY4 region spans residues 131–142 (VPCIKSFLIEIQ). S-palmitoyl cysteine attachment occurs at residues C133, C143, and C156. An interacts with SPRY1, SPRY2, and SPRY4 region spans residues 149–160 (SIYVHTFCDPLF). The interval 167 to 178 (FSNIRINMQKEI) is interacts with SPRY1, SPRY2, SPRY3 and SPRY4.

It belongs to the caveolin family. As to quaternary structure, homooligomer. Interacts with GLIPR2. Interacts with NOSTRIN. Interacts with SNAP25 and STX1A. Interacts (via the N-terminus) with DPP4; the interaction is direct. Interacts with CTNNB1, CDH1 and JUP. Interacts with PACSIN2; this interaction induces membrane tubulation. Interacts with SLC7A9. Interacts with BMX and BTK. Interacts with TGFBR1. Interacts with CAVIN3 (via leucine-zipper domain) in a cholesterol-sensitive manner. Interacts with CAVIN1. Interacts with EHD2 in a cholesterol-dependent manner. Forms a ternary complex with UBXN6 and VCP; mediates CAV1 targeting to lysosomes for degradation. Interacts with ABCG1; this interaction regulates ABCG1-mediated cholesterol efflux. Interacts with NEU3; this interaction enhances NEU3 sialidase activity within caveola. Interacts (via C-terminus) with SPRY1, SPRY2 (via C-terminus), SPRY3, and SPRY4. Interacts with IGFBP5; this interaction allows trafficking of IGFBP5 from the plasma membrane to the nucleus. Phosphorylated at Tyr-14 by ABL1 in response to oxidative stress. In terms of processing, ubiquitinated. Undergo monoubiquitination and multi- and/or polyubiquitination. Monoubiquitination of N-terminal lysines promotes integration in a ternary complex with UBXN6 and VCP which promotes oligomeric CAV1 targeting to lysosomes for degradation. Ubiquitinated by ZNRF1; leading to degradation and modulation of the TLR4-mediated immune response.

It is found in the golgi apparatus membrane. Its subcellular location is the cell membrane. The protein resides in the membrane. It localises to the caveola. The protein localises to the membrane raft. May act as a scaffolding protein within caveolar membranes. Forms a stable heterooligomeric complex with CAV2 that targets to lipid rafts and drives caveolae formation. Mediates the recruitment of CAVIN proteins (CAVIN1/2/3/4) to the caveolae. Interacts directly with G-protein alpha subunits and can functionally regulate their activity. Involved in the costimulatory signal essential for T-cell receptor (TCR)-mediated T-cell activation. Its binding to DPP4 induces T-cell proliferation and NF-kappa-B activation in a T-cell receptor/CD3-dependent manner. Recruits CTNNB1 to caveolar membranes and may regulate CTNNB1-mediated signaling through the Wnt pathway. Negatively regulates TGFB1-mediated activation of SMAD2/3 by mediating the internalization of TGFBR1 from membrane rafts leading to its subsequent degradation. Binds 20(S)-hydroxycholesterol (20(S)-OHC). This Muntiacus muntjak (Barking deer) protein is Caveolin-1 (CAV1).